A 558-amino-acid chain; its full sequence is Dihydroxy-acid dehydratase (558 aa).

Aspartate 78 contributes to the Mg(2+) binding site. Residue cysteine 119 coordinates [2Fe-2S] cluster. Aspartate 120 and lysine 121 together coordinate Mg(2+). Lysine 121 is subject to N6-carboxylysine. A [2Fe-2S] cluster-binding site is contributed by cysteine 192. Glutamate 446 is a binding site for Mg(2+). Residue serine 472 is the Proton acceptor of the active site.

This sequence belongs to the IlvD/Edd family. In terms of assembly, homodimer. [2Fe-2S] cluster is required as a cofactor. It depends on Mg(2+) as a cofactor.

It carries out the reaction (2R)-2,3-dihydroxy-3-methylbutanoate = 3-methyl-2-oxobutanoate + H2O. It catalyses the reaction (2R,3R)-2,3-dihydroxy-3-methylpentanoate = (S)-3-methyl-2-oxopentanoate + H2O. The protein operates within amino-acid biosynthesis; L-isoleucine biosynthesis; L-isoleucine from 2-oxobutanoate: step 3/4. Its pathway is amino-acid biosynthesis; L-valine biosynthesis; L-valine from pyruvate: step 3/4. Functions in the biosynthesis of branched-chain amino acids. Catalyzes the dehydration of (2R,3R)-2,3-dihydroxy-3-methylpentanoate (2,3-dihydroxy-3-methylvalerate) into 2-oxo-3-methylpentanoate (2-oxo-3-methylvalerate) and of (2R)-2,3-dihydroxy-3-methylbutanoate (2,3-dihydroxyisovalerate) into 2-oxo-3-methylbutanoate (2-oxoisovalerate), the penultimate precursor to L-isoleucine and L-valine, respectively. This Campylobacter jejuni subsp. doylei (strain ATCC BAA-1458 / RM4099 / 269.97) protein is Dihydroxy-acid dehydratase.